Consider the following 429-residue polypeptide: Putative F-box/kelch-repeat protein At2g21680 (429 aa).

Positions 1–32 (MVLISETSDDGSTGGDHQIKKPKKEEDRNKKL) are disordered. Positions 17–29 (HQIKKPKKEEDRN) are enriched in basic and acidic residues. An F-box domain is found at 37-84 (QVSLPIPEELILRCFLLVRRCHHPSLSLVCRSFHSLMSKLYDDRLRLG). Kelch repeat units lie at residues 144 to 175 (DIYVIGGRVGEKLLEDVGVGYNKPISGGRRGE), 176 to 221 (TSIR…VIDG), 222 to 267 (KIYV…LTYA), 269 to 313 (MKEK…VVDN), and 315 to 359 (LFCI…DGYK).

The chain is Putative F-box/kelch-repeat protein At2g21680 from Arabidopsis thaliana (Mouse-ear cress).